A 719-amino-acid polypeptide reads, in one-letter code: Polyribonucleotide nucleotidyltransferase (719 aa).

Positions 491 and 497 each coordinate Mg(2+). The KH domain maps to 558-617; that stretch reads PRMLTIKINPEKIRDVIGKGGATIRALTEETGTQIDISDDGTIVIASVDETQAKEAQRRI. The S1 motif domain occupies 627-695; the sequence is GQIYDGSVLR…DKGRLRLSIK (69 aa).

The protein belongs to the polyribonucleotide nucleotidyltransferase family. Mg(2+) is required as a cofactor.

It is found in the cytoplasm. The enzyme catalyses RNA(n+1) + phosphate = RNA(n) + a ribonucleoside 5'-diphosphate. Its function is as follows. Involved in mRNA degradation. Catalyzes the phosphorolysis of single-stranded polyribonucleotides processively in the 3'- to 5'-direction. The polypeptide is Polyribonucleotide nucleotidyltransferase (Bordetella bronchiseptica (strain ATCC BAA-588 / NCTC 13252 / RB50) (Alcaligenes bronchisepticus)).